Reading from the N-terminus, the 121-residue chain is Transposase InsC for insertion element IS2A (121 aa).

This sequence belongs to the transposase 8 family.

Its function is as follows. Involved in the transposition of the insertion sequence IS2. The protein is Transposase InsC for insertion element IS2A (insC1) of Escherichia coli (strain K12).